We begin with the raw amino-acid sequence, 44 residues long: Cytochrome b559 subunit beta (44 aa).

A helical membrane pass occupies residues 19–35 (WIAVHTLAVPSVFFLGA). Residue H23 participates in heme binding.

It belongs to the PsbE/PsbF family. Heterodimer of an alpha subunit and a beta subunit. PSII is composed of 1 copy each of membrane proteins PsbA, PsbB, PsbC, PsbD, PsbE, PsbF, PsbH, PsbI, PsbJ, PsbK, PsbL, PsbM, PsbT, PsbX, PsbY, PsbZ, Psb30/Ycf12, peripheral proteins PsbO, CyanoQ (PsbQ), PsbU, PsbV and a large number of cofactors. It forms dimeric complexes. Heme b is required as a cofactor.

It is found in the cellular thylakoid membrane. In terms of biological role, this b-type cytochrome is tightly associated with the reaction center of photosystem II (PSII). PSII is a light-driven water:plastoquinone oxidoreductase that uses light energy to abstract electrons from H(2)O, generating O(2) and a proton gradient subsequently used for ATP formation. It consists of a core antenna complex that captures photons, and an electron transfer chain that converts photonic excitation into a charge separation. This Cyanothece sp. (strain PCC 7425 / ATCC 29141) protein is Cytochrome b559 subunit beta.